We begin with the raw amino-acid sequence, 386 residues long: Protein RecA (386 aa).

76–83 (GPESSGKT) provides a ligand contact to ATP. The segment at 362–386 (FDDEDDDFDASTAPAGTFTEVTTEN) is disordered.

Belongs to the RecA family.

Its subcellular location is the cytoplasm. Functionally, can catalyze the hydrolysis of ATP in the presence of single-stranded DNA, the ATP-dependent uptake of single-stranded DNA by duplex DNA, and the ATP-dependent hybridization of homologous single-stranded DNAs. It interacts with LexA causing its activation and leading to its autocatalytic cleavage. This is Protein RecA from Corynebacterium efficiens (strain DSM 44549 / YS-314 / AJ 12310 / JCM 11189 / NBRC 100395).